The chain runs to 335 residues: MGKKGLLLINIGSPKSYQVNDVKKYLSEFLMDEDVITLPYVLRWPLVNLLIVPRRAPFSAENYKKVWMKEGSPIAVYTRRFAALLQEELKDQFVVKVGLQYSEPSVESALKDLQQAGVDEILVAPMFPQYAEATNGSSFKLAERMAKKLHLTAPLRRLPAFFDDASFVGTSVKLVEETLQDKEVDHYLFSFHGLPESHVRKIPGCLTTEDCCFEKNACAKNCYRAQCFATATAIAESLNLAPSHWSVAFQSRLGRAEWLKPATDHSLEVLAKTGKKNIAVICPSFVADCIETLEEIGIGGQETFHEHGGDQYYLVPCVNDNPKWVQGFADLVKSI.

Positions 192 and 291 each coordinate Fe cation.

It belongs to the ferrochelatase family.

It localises to the cytoplasm. The enzyme catalyses heme b + 2 H(+) = protoporphyrin IX + Fe(2+). The protein operates within porphyrin-containing compound metabolism; protoheme biosynthesis; protoheme from protoporphyrin-IX: step 1/1. Functionally, catalyzes the ferrous insertion into protoporphyrin IX. The sequence is that of Ferrochelatase from Bdellovibrio bacteriovorus (strain ATCC 15356 / DSM 50701 / NCIMB 9529 / HD100).